The sequence spans 118 residues: MLDSLKQKKNFQRIKMRIKTGDLVKVINGKEKGKTGEVLKTIPLENKVVVKGINLRTKHVKPTQEGETGRILTEEASLHASNVMFFSKEKNLTSKIEYFIDKEGVKKRRLKKTGEVID.

This sequence belongs to the universal ribosomal protein uL24 family. Part of the 50S ribosomal subunit.

Functionally, one of two assembly initiator proteins, it binds directly to the 5'-end of the 23S rRNA, where it nucleates assembly of the 50S subunit. Its function is as follows. One of the proteins that surrounds the polypeptide exit tunnel on the outside of the subunit. The chain is Large ribosomal subunit protein uL24 from Prochlorococcus marinus (strain MIT 9215).